The primary structure comprises 329 residues: MAEAGTGEPSPSVEGEHGTEYDTLPSDTVSLSDSDSDLSLPGGAEVEALSPMGLPGEEDSGPDEPPSPPSGLLPATVQPFHLRGMSSTFSQRSRDIFDCLEGAARRAPSSVAHTSMSDNGGFKRPLAPSGRSPVEGLGRAHRSPASPRVPPVPDYVAHPERWTKYSLEDVTEVSEQSNQATALAFLGSQSLAAPTDCVSSFNQDPSSCGEGRVIFTKPVRGVEARHERKRVLGKVGEPGRGGLGNPATDRGEGPVELAHLAGPGSPEAEEWGSHHGGLQEVEALSGSVHSGSVPGLPPVETVGFHGSRKRSRDHFRNKSSSPEDPGAEV.

Disordered stretches follow at residues 1-88 (MAEA…MSST) and 104-156 (ARRA…PDYV). Residues 22 to 41 (DTLPSDTVSLSDSDSDLSLP) show a composition bias toward low complexity. 6 positions are modified to phosphoserine: serine 60, serine 67, serine 86, serine 132, serine 143, and serine 146. The interval 77 to 104 (VQPFHLRGMSSTFSQRSRDIFDCLEGAA) is hom2; mediates interaction with the U5 snRNP complexes and required for spliceosomal tri-snRNP complex assembly. Positions 149 to 316 (VPPVPDYVAH…SRKRSRDHFR (168 aa)) are interaction with SNRNP200. The hom3; mediates interaction with the U5 snRNP complexes stretch occupies residues 150–186 (PPVPDYVAHPERWTKYSLEDVTEVSEQSNQATALAFL). Residues 201–250 (FNQDPSSCGEGRVIFTKPVRGVEARHERKRVLGKVGEPGRGGLGNPATDR) form a hom4; necessary for interaction with the PRPF19 complex and required for spliceosomal tri-snRNP complex assembly region. Lysine 217 is modified (N6-acetyllysine). Residues 221 to 329 (GVEARHERKR…SSPEDPGAEV (109 aa)) form a disordered region. Serine 265 is subject to Phosphoserine. Residues 306–317 (GSRKRSRDHFRN) show a composition bias toward basic residues. Serine 321 bears the Phosphoserine mark.

This sequence belongs to the TSSC4 family. In terms of assembly, interacts in a RNA-independent manner with distinct U5 snRNP-containing complexes, the mono-U5 snRNP and the post-splicing U5 snRNP-PRPF19 complex. Interacts with SNRNP200; the interaction is direct, excludes recruitment of C9ORF78 and WBP4 to SNRNP200 and negatively regulates its RNA helicase activity. Interacts with PRPF8; the interaction is direct. As to expression, expressed in fetal brain, lung, liver and kidney. Widely expressed in adult tissues.

It localises to the nucleus. Its subcellular location is the cytoplasm. Its function is as follows. Protein associated with the U5 snRNP, during its maturation and its post-splicing recycling and which is required for spliceosomal tri-snRNP complex assembly in the nucleus. Has a molecular sequestering activity and transiently hinders SNRNP200 binding sites for constitutive splicing factors that intervene later during the assembly of the spliceosome and splicing. Together with its molecular sequestering activity, may also function as a molecular adapter and placeholder, coordinating the assembly of the U5 snRNP and its association with the U4/U6 di-snRNP. The sequence is that of U5 small nuclear ribonucleoprotein TSSC4 from Homo sapiens (Human).